The chain runs to 329 residues: GTP 3',8-cyclase (329 aa).

One can recognise a Radical SAM core domain in the interval Ala8–Ala234. Arg17 serves as a coordination point for GTP. Cys24 and Cys28 together coordinate [4Fe-4S] cluster. Tyr30 lines the S-adenosyl-L-methionine pocket. Cys31 lines the [4Fe-4S] cluster pocket. Arg68 contributes to the GTP binding site. An S-adenosyl-L-methionine-binding site is contributed by Gly72. Thr99 lines the GTP pocket. Position 123 (Ser123) interacts with S-adenosyl-L-methionine. GTP is bound at residue Lys160. Residue Met194 coordinates S-adenosyl-L-methionine. The [4Fe-4S] cluster site is built by Cys257 and Cys260. Position 262–264 (Arg262–Arg264) interacts with GTP. Cys274 is a [4Fe-4S] cluster binding site.

Belongs to the radical SAM superfamily. MoaA family. As to quaternary structure, monomer and homodimer. The cofactor is [4Fe-4S] cluster.

The enzyme catalyses GTP + AH2 + S-adenosyl-L-methionine = (8S)-3',8-cyclo-7,8-dihydroguanosine 5'-triphosphate + 5'-deoxyadenosine + L-methionine + A + H(+). Its pathway is cofactor biosynthesis; molybdopterin biosynthesis. Its function is as follows. Catalyzes the cyclization of GTP to (8S)-3',8-cyclo-7,8-dihydroguanosine 5'-triphosphate. The sequence is that of GTP 3',8-cyclase from Escherichia coli O7:K1 (strain IAI39 / ExPEC).